A 148-amino-acid chain; its full sequence is Large ribosomal subunit protein bL9 (148 aa).

Belongs to the bacterial ribosomal protein bL9 family.

Binds to the 23S rRNA. This is Large ribosomal subunit protein bL9 from Thermus thermophilus (strain ATCC BAA-163 / DSM 7039 / HB27).